A 450-amino-acid polypeptide reads, in one-letter code: Phosphoglucosamine mutase (450 aa).

Residue S101 is the Phosphoserine intermediate of the active site. Mg(2+) contacts are provided by S101, D241, D243, and D245. S101 is modified (phosphoserine).

This sequence belongs to the phosphohexose mutase family. The cofactor is Mg(2+). Activated by phosphorylation.

The catalysed reaction is alpha-D-glucosamine 1-phosphate = D-glucosamine 6-phosphate. Its function is as follows. Catalyzes the conversion of glucosamine-6-phosphate to glucosamine-1-phosphate. This Listeria innocua serovar 6a (strain ATCC BAA-680 / CLIP 11262) protein is Phosphoglucosamine mutase.